The chain runs to 144 residues: Large ribosomal subunit protein uL15 (144 aa).

The interval 1 to 56 (MELNTLAPAPGAKSSKKRVGRGIGSGLGKTGGRGHKGQKSRSGGSVKPGFEGGQMP) is disordered. Residues 21-31 (RGIGSGLGKTG) are compositionally biased toward gly residues.

The protein belongs to the universal ribosomal protein uL15 family. In terms of assembly, part of the 50S ribosomal subunit.

Its function is as follows. Binds to the 23S rRNA. In Idiomarina loihiensis (strain ATCC BAA-735 / DSM 15497 / L2-TR), this protein is Large ribosomal subunit protein uL15.